Reading from the N-terminus, the 931-residue chain is Translation initiation factor IF-2 (931 aa).

A disordered region spans residues 32-310 (KSASSTVEPP…SSKARKNRLA (279 aa)). Residues 50–59 (FASSGQGNAS) are compositionally biased toward polar residues. Pro residues predominate over residues 82-96 (PAAPSAPKPAAPAAP). The segment covering 156–168 (GNAPQGGNNANGA) has biased composition (low complexity). Gly residues-rich tracts occupy residues 217-238 (RPGQ…GGAK), 248-271 (GQGG…GFQG), and 281-298 (ARGG…GRQG). The region spanning 424–596 (PRPPVVTVMG…VLLTADAELD (173 aa)) is the tr-type G domain. Residues 433-440 (GHVDHGKT) form a G1 region. Position 433 to 440 (433 to 440 (GHVDHGKT)) interacts with GTP. The G2 stretch occupies residues 458-462 (GITQR). Residues 483 to 486 (DTPG) form a G3 region. GTP-binding positions include 483 to 487 (DTPGH) and 537 to 540 (NKID). Residues 537 to 540 (NKID) form a G4 region. Residues 573 to 575 (SAK) are G5.

It belongs to the TRAFAC class translation factor GTPase superfamily. Classic translation factor GTPase family. IF-2 subfamily.

It is found in the cytoplasm. One of the essential components for the initiation of protein synthesis. Protects formylmethionyl-tRNA from spontaneous hydrolysis and promotes its binding to the 30S ribosomal subunits. Also involved in the hydrolysis of GTP during the formation of the 70S ribosomal complex. The protein is Translation initiation factor IF-2 of Bifidobacterium adolescentis (strain ATCC 15703 / DSM 20083 / NCTC 11814 / E194a).